A 390-amino-acid polypeptide reads, in one-letter code: uncharacterized protein (390 aa).

This is an uncharacterized protein from Acanthamoeba polyphaga (Amoeba).